A 542-amino-acid chain; its full sequence is Phosphoenolpyruvate carboxykinase (ATP) (542 aa).

Substrate is bound by residues Arg67, Tyr208, and Lys214. Residues Lys214, His233, and 249–257 (GLSGTGKTT) contribute to the ATP site. 2 residues coordinate Mn(2+): Lys214 and His233. Asp270 lines the Mn(2+) pocket. Residues Glu298, Arg334, 450-451 (RI), and Thr456 contribute to the ATP site. Arg334 lines the substrate pocket.

It belongs to the phosphoenolpyruvate carboxykinase (ATP) family. In terms of assembly, monomer. Mn(2+) serves as cofactor.

It localises to the cytoplasm. The catalysed reaction is oxaloacetate + ATP = phosphoenolpyruvate + ADP + CO2. Its pathway is carbohydrate biosynthesis; gluconeogenesis. In terms of biological role, involved in the gluconeogenesis. Catalyzes the conversion of oxaloacetate (OAA) to phosphoenolpyruvate (PEP) through direct phosphoryl transfer between the nucleoside triphosphate and OAA. The protein is Phosphoenolpyruvate carboxykinase (ATP) of Vibrio vulnificus (strain CMCP6).